The chain runs to 631 residues: UvrABC system protein C (631 aa).

The segment at 1 to 20 is disordered; it reads MKNETEAVADQPPKTGPVKP. A GIY-YIG domain is found at 34–112; that stretch reads MSPGVYRMLD…IKQLKPKFNV (79 aa). One can recognise a UVR domain in the interval 222–257; that stretch reads TDLQRQLADGMAAASEAMEFERAAALRDRIRALTNV.

The protein belongs to the UvrC family. In terms of assembly, interacts with UvrB in an incision complex.

Its subcellular location is the cytoplasm. Its function is as follows. The UvrABC repair system catalyzes the recognition and processing of DNA lesions. UvrC both incises the 5' and 3' sides of the lesion. The N-terminal half is responsible for the 3' incision and the C-terminal half is responsible for the 5' incision. The sequence is that of UvrABC system protein C from Jannaschia sp. (strain CCS1).